Consider the following 462-residue polypeptide: Adenosylhomocysteinase (462 aa).

Substrate is bound by residues Thr55, Asp128, and Glu188. 189-191 (TTT) lines the NAD(+) pocket. Lys218 and Asp222 together coordinate substrate. Residues Asn223, 252–257 (GYGDVG), Glu275, Asn310, 331–333 (IGH), and Asn376 each bind NAD(+).

It belongs to the adenosylhomocysteinase family. Requires NAD(+) as cofactor.

It is found in the cytoplasm. It carries out the reaction S-adenosyl-L-homocysteine + H2O = L-homocysteine + adenosine. It participates in amino-acid biosynthesis; L-homocysteine biosynthesis; L-homocysteine from S-adenosyl-L-homocysteine: step 1/1. Its function is as follows. May play a key role in the regulation of the intracellular concentration of adenosylhomocysteine. The chain is Adenosylhomocysteinase from Roseobacter denitrificans (strain ATCC 33942 / OCh 114) (Erythrobacter sp. (strain OCh 114)).